The following is an 87-amino-acid chain: Spore morphogenesis and germination protein YwcE (87 aa).

Transmembrane regions (helical) follow at residues 1–21 (MMDM…FIWL), 26–46 (VALS…FYAT), and 56–76 (LMII…FIIY).

The protein belongs to the YwcE family.

It localises to the cell membrane. It is found in the spore membrane. Its subcellular location is the spore outer membrane. Functionally, required for proper spore morphogenesis. Important for spore germination. This is Spore morphogenesis and germination protein YwcE (ywcE) from Bacillus subtilis (strain 168).